The chain runs to 185 residues: V-type ATP synthase subunit E (185 aa).

This sequence belongs to the V-ATPase E subunit family.

Its function is as follows. Produces ATP from ADP in the presence of a proton gradient across the membrane. This chain is V-type ATP synthase subunit E, found in Deinococcus radiodurans (strain ATCC 13939 / DSM 20539 / JCM 16871 / CCUG 27074 / LMG 4051 / NBRC 15346 / NCIMB 9279 / VKM B-1422 / R1).